A 292-amino-acid chain; its full sequence is 4-hydroxy-tetrahydrodipicolinate synthase (292 aa).

Residue threonine 45 participates in pyruvate binding. Tyrosine 133 functions as the Proton donor/acceptor in the catalytic mechanism. The active-site Schiff-base intermediate with substrate is lysine 161. Isoleucine 203 is a binding site for pyruvate.

This sequence belongs to the DapA family. Homotetramer; dimer of dimers.

It is found in the cytoplasm. It catalyses the reaction L-aspartate 4-semialdehyde + pyruvate = (2S,4S)-4-hydroxy-2,3,4,5-tetrahydrodipicolinate + H2O + H(+). It functions in the pathway amino-acid biosynthesis; L-lysine biosynthesis via DAP pathway; (S)-tetrahydrodipicolinate from L-aspartate: step 3/4. Its function is as follows. Catalyzes the condensation of (S)-aspartate-beta-semialdehyde [(S)-ASA] and pyruvate to 4-hydroxy-tetrahydrodipicolinate (HTPA). This chain is 4-hydroxy-tetrahydrodipicolinate synthase, found in Erwinia tasmaniensis (strain DSM 17950 / CFBP 7177 / CIP 109463 / NCPPB 4357 / Et1/99).